The primary structure comprises 442 residues: ATP-dependent RNA helicase SUB2-2 (442 aa).

The Q motif signature appears at 58 to 86; the sequence is TGFKDFLLKPELARAIIDCGFEHPSEVQQ. The 176-residue stretch at 89 to 264 folds into the Helicase ATP-binding domain; it reads IPQSIHGTDV…RRFLQNPLEI (176 aa). 102–109 lines the ATP pocket; it reads AKSGLGKT. Residues 211–214 carry the DECD box motif; it reads DECD. In terms of domain architecture, Helicase C-terminal spans 292-437; the sequence is KLAQLLDDLE…EFPEEGIDPS (146 aa).

The protein belongs to the DEAD box helicase family. DECD subfamily.

The protein resides in the nucleus. The catalysed reaction is ATP + H2O = ADP + phosphate + H(+). Its function is as follows. ATP-binding RNA helicase involved in transcription elongation and required for the export of mRNA out of the nucleus. SUB2 also plays a role in pre-mRNA splicing and spliceosome assembly. May be involved in rDNA and telomeric silencing, and maintenance of genome integrity. In Vanderwaltozyma polyspora (strain ATCC 22028 / DSM 70294 / BCRC 21397 / CBS 2163 / NBRC 10782 / NRRL Y-8283 / UCD 57-17) (Kluyveromyces polysporus), this protein is ATP-dependent RNA helicase SUB2-2 (SUB2-2).